The primary structure comprises 266 residues: MKNEKNEMPFWEHIEELRKHLIHSVCAMIIATIILMNNKNVIFDYILFGPAKTDFITYRLFHKLGKIFHRSHHSFYFFSHNLEIQNRQIFGQFNIYVWTCFIGGFILSFPYIFYEFWKFIKPALSDEERKYSRGIIMMVTFLFILGVLFGYFILCPFLIHFGYTFRISSFPRNIFDLSDYISLIMHSILSMGITFLFPIFIYFLTKIELISYPFLKKYRKHAFLILLILASAITPGDIFSTIVVLIPLMILYQFSIYISFYVSKKK.

A run of 6 helical transmembrane segments spans residues 28–48, 93–113, 134–154, 183–203, 221–241, and 242–262; these read MIIA…YILF, FNIY…PYIF, GIIM…YFIL, LIMH…FIYF, HAFL…IFST, and IVVL…SFYV.

This sequence belongs to the TatC family. As to quaternary structure, forms a complex with TatA.

The protein localises to the cell inner membrane. Functionally, part of the twin-arginine translocation (Tat) system that transports large folded proteins containing a characteristic twin-arginine motif in their signal peptide across membranes. The protein is Sec-independent protein translocase protein TatC of Blattabacterium sp. subsp. Periplaneta americana (strain BPLAN) (Periplaneta americana symbiotic bacterium).